We begin with the raw amino-acid sequence, 210 residues long: Large ribosomal subunit protein uL4 (210 aa).

The interval 41-79 (MANARQGTASTKTRAEVRGGGRKPWRQKGTGRARAGSNR) is disordered. Positions 43-52 (NARQGTASTK) are enriched in polar residues. The segment covering 60–71 (GGRKPWRQKGTG) has biased composition (basic residues).

Belongs to the universal ribosomal protein uL4 family. Part of the 50S ribosomal subunit.

Functionally, one of the primary rRNA binding proteins, this protein initially binds near the 5'-end of the 23S rRNA. It is important during the early stages of 50S assembly. It makes multiple contacts with different domains of the 23S rRNA in the assembled 50S subunit and ribosome. In terms of biological role, forms part of the polypeptide exit tunnel. This chain is Large ribosomal subunit protein uL4, found in Cyanothece sp. (strain PCC 7425 / ATCC 29141).